Here is a 100-residue protein sequence, read N- to C-terminus: NADH-quinone oxidoreductase subunit K (100 aa).

3 helical membrane-spanning segments follow: residues 2 to 22 (VTLN…LVGV), 28 to 48 (LLML…GLVA), and 63 to 83 (FFII…LILW).

It belongs to the complex I subunit 4L family. NDH-1 is composed of 14 different subunits. Subunits NuoA, H, J, K, L, M, N constitute the membrane sector of the complex.

It localises to the cell inner membrane. It catalyses the reaction a quinone + NADH + 5 H(+)(in) = a quinol + NAD(+) + 4 H(+)(out). In terms of biological role, NDH-1 shuttles electrons from NADH, via FMN and iron-sulfur (Fe-S) centers, to quinones in the respiratory chain. The immediate electron acceptor for the enzyme in this species is believed to be ubiquinone. Couples the redox reaction to proton translocation (for every two electrons transferred, four hydrogen ions are translocated across the cytoplasmic membrane), and thus conserves the redox energy in a proton gradient. The sequence is that of NADH-quinone oxidoreductase subunit K from Wolinella succinogenes (strain ATCC 29543 / DSM 1740 / CCUG 13145 / JCM 31913 / LMG 7466 / NCTC 11488 / FDC 602W) (Vibrio succinogenes).